The primary structure comprises 326 residues: Porphobilinogen deaminase (326 aa).

At cysteine 251 the chain carries S-(dipyrrolylmethanemethyl)cysteine.

Belongs to the HMBS family. It depends on dipyrromethane as a cofactor.

It carries out the reaction 4 porphobilinogen + H2O = hydroxymethylbilane + 4 NH4(+). Its pathway is porphyrin-containing compound metabolism; protoporphyrin-IX biosynthesis; coproporphyrinogen-III from 5-aminolevulinate: step 2/4. Its function is as follows. Tetrapolymerization of the monopyrrole PBG into the hydroxymethylbilane pre-uroporphyrinogen in several discrete steps. In Eremothecium gossypii (strain ATCC 10895 / CBS 109.51 / FGSC 9923 / NRRL Y-1056) (Yeast), this protein is Porphobilinogen deaminase (HEM3).